The chain runs to 182 residues: ATP synthase subunit delta (182 aa).

It belongs to the ATPase delta chain family. As to quaternary structure, F-type ATPases have 2 components, F(1) - the catalytic core - and F(0) - the membrane proton channel. F(1) has five subunits: alpha(3), beta(3), gamma(1), delta(1), epsilon(1). F(0) has three main subunits: a(1), b(2) and c(10-14). The alpha and beta chains form an alternating ring which encloses part of the gamma chain. F(1) is attached to F(0) by a central stalk formed by the gamma and epsilon chains, while a peripheral stalk is formed by the delta and b chains.

Its subcellular location is the cell inner membrane. F(1)F(0) ATP synthase produces ATP from ADP in the presence of a proton or sodium gradient. F-type ATPases consist of two structural domains, F(1) containing the extramembraneous catalytic core and F(0) containing the membrane proton channel, linked together by a central stalk and a peripheral stalk. During catalysis, ATP synthesis in the catalytic domain of F(1) is coupled via a rotary mechanism of the central stalk subunits to proton translocation. Its function is as follows. This protein is part of the stalk that links CF(0) to CF(1). It either transmits conformational changes from CF(0) to CF(1) or is implicated in proton conduction. The protein is ATP synthase subunit delta of Bdellovibrio bacteriovorus (strain ATCC 15356 / DSM 50701 / NCIMB 9529 / HD100).